The chain runs to 724 residues: Phenylalanine ammonia-lyase (724 aa).

Tyr91 acts as the Proton donor/acceptor in catalysis. The 5-imidazolinone (Ala-Gly) cross-link spans 205–207 (ASG). Ser206 is subject to 2,3-didehydroalanine (Ser). 7 residues coordinate (E)-cinnamate: Asn265, Gln357, Arg363, Asn393, Lys467, Glu495, and Asn498.

It belongs to the PAL/histidase family. Homotetramer. In terms of processing, contains an active site 4-methylidene-imidazol-5-one (MIO), which is formed autocatalytically by cyclization and dehydration of residues Ala-Ser-Gly.

The protein localises to the cytoplasm. It catalyses the reaction L-phenylalanine = (E)-cinnamate + NH4(+). The protein operates within phenylpropanoid metabolism; trans-cinnamate biosynthesis; trans-cinnamate from L-phenylalanine: step 1/1. Catalyzes the non-oxidative deamination of L-phenylalanine to form trans-cinnamic acid and a free ammonium ion. Facilitates the commitment step in phenylpropanoid pathways that produce secondary metabolites such as lignins, coumarins and flavonoids. This Mycosarcoma maydis (Corn smut fungus) protein is Phenylalanine ammonia-lyase (PAL1).